The sequence spans 730 residues: Polyribonucleotide nucleotidyltransferase (730 aa).

Positions 489 and 495 each coordinate Mg(2+). The KH domain maps to 556-615 (PKIDTIKVDVDKIKIVIGKGGETIDKIIEETGVKIDIDEDGNIAIYSSDQEAINRTKEII). The S1 motif domain occupies 625–693 (GEIYEAEVVR…DKGRIDASMK (69 aa)). The interval 691 to 730 (SMKALLPRPPRSEKSNKEDHQSVRHHGSPKDDKGKEKYDK) is disordered. The segment covering 700–730 (PRSEKSNKEDHQSVRHHGSPKDDKGKEKYDK) has biased composition (basic and acidic residues).

Belongs to the polyribonucleotide nucleotidyltransferase family. Mg(2+) serves as cofactor.

The protein resides in the cytoplasm. It carries out the reaction RNA(n+1) + phosphate = RNA(n) + a ribonucleoside 5'-diphosphate. Involved in mRNA degradation. Catalyzes the phosphorolysis of single-stranded polyribonucleotides processively in the 3'- to 5'-direction. In Streptococcus mutans serotype c (strain ATCC 700610 / UA159), this protein is Polyribonucleotide nucleotidyltransferase.